Reading from the N-terminus, the 245-residue chain is 23S rRNA (guanosine-2'-O-)-methyltransferase RlmB (245 aa).

S-adenosyl-L-methionine is bound by residues Gly197, Ile217, and Leu226.

This sequence belongs to the class IV-like SAM-binding methyltransferase superfamily. RNA methyltransferase TrmH family. RlmB subfamily.

The protein localises to the cytoplasm. The enzyme catalyses guanosine(2251) in 23S rRNA + S-adenosyl-L-methionine = 2'-O-methylguanosine(2251) in 23S rRNA + S-adenosyl-L-homocysteine + H(+). In terms of biological role, specifically methylates the ribose of guanosine 2251 in 23S rRNA. The polypeptide is 23S rRNA (guanosine-2'-O-)-methyltransferase RlmB (Photobacterium profundum (strain SS9)).